We begin with the raw amino-acid sequence, 471 residues long: UDP-N-acetylmuramate--L-alanine ligase (471 aa).

112 to 118 lines the ATP pocket; sequence GTHGKTT.

The protein belongs to the MurCDEF family.

The protein localises to the cytoplasm. It catalyses the reaction UDP-N-acetyl-alpha-D-muramate + L-alanine + ATP = UDP-N-acetyl-alpha-D-muramoyl-L-alanine + ADP + phosphate + H(+). The protein operates within cell wall biogenesis; peptidoglycan biosynthesis. Functionally, cell wall formation. This chain is UDP-N-acetylmuramate--L-alanine ligase, found in Cupriavidus metallidurans (strain ATCC 43123 / DSM 2839 / NBRC 102507 / CH34) (Ralstonia metallidurans).